The primary structure comprises 634 residues: Growth hormone receptor (634 aa).

A signal peptide spans 1-18; the sequence is MDLWQLLLTLAVAGSSDA. The Extracellular portion of the chain corresponds to 19-260; it reads FSGSEATPAF…NPSACEEDFQ (242 aa). N-linked (GlcNAc...) asparagine glycosylation occurs at N46. A disulfide bridge links C56 with C66. An N-linked (GlcNAc...) asparagine glycan is attached at N73. Cysteines 97 and 108 form a disulfide. Residue N111 is glycosylated (N-linked (GlcNAc...) asparagine). C122 and C136 form a disulfide bridge. One can recognise a Fibronectin type-III domain in the interval 147–250; the sequence is PPVGLNWTLL…EVLLITFPQM (104 aa). 3 N-linked (GlcNAc...) asparagine glycosylation sites follow: N152, N157, and N196. The WSXWS motif signature appears at 236–240; sequence YGKFS. The chain crosses the membrane as a helical span at residues 261–284; that stretch reads FPWFLIIIFGILGLAVTLYLLIFS. Residues 285-634 are Cytoplasmic-facing; sequence KQQRIKMLIL…STDQLNKIMP (350 aa). The tract at residues 290–375 is required for JAK2 binding; sequence KMLILPPVPV…HEKSLNIFGA (86 aa). Residues 293-301 carry the Box 1 motif motif; sequence ILPPVPVPK. Positions 336-345 match the UbE motif motif; that stretch reads DSWVEFIELD. A Phosphoserine modification is found at S337.

It belongs to the type I cytokine receptor family. Type 1 subfamily. As to quaternary structure, on growth hormone (GH) binding, forms homodimers and binds JAK2 via a box 1-containing domain. The soluble form (GHBP) is produced by phorbol ester-promoted proteolytic cleavage at the cell surface (shedding) by ADAM17/TACE. Shedding is inhibited by growth hormone (GH) binding to the receptor probably due to a conformational change in GHR rendering the receptor inaccessible to ADAM17. In terms of processing, on GH binding, phosphorylated on tyrosine residues in the cytoplasmic domain by JAK2. Post-translationally, ubiquitinated by the ECS(SOCS2) complex following ligand-binding and phosphorylation by JAK2, leading to its degradation by the proteasome. Regulation by the ECS(SOCS2) complex acts as a negative feedback loop of growth hormone receptor signaling. Ubiquitination is not sufficient for GHR internalization.

It is found in the cell membrane. The protein resides in the secreted. Receptor for pituitary gland growth hormone (GH1) involved in regulating postnatal body growth. On ligand binding, couples to the JAK2/STAT5 pathway. In terms of biological role, the soluble form (GHBP) acts as a reservoir of growth hormone in plasma and may be a modulator/inhibitor of GH signaling. The protein is Growth hormone receptor (GHR) of Bos taurus (Bovine).